Reading from the N-terminus, the 120-residue chain is NAD(P)H-quinone oxidoreductase subunit 3 (120 aa).

3 helical membrane passes run 10 to 30, 64 to 84, and 89 to 109; these read FLGF…TNLI, MFAL…PWAV, and LGLL…IALA.

It belongs to the complex I subunit 3 family. As to quaternary structure, NDH-1 can be composed of about 15 different subunits; different subcomplexes with different compositions have been identified which probably have different functions.

It is found in the cellular thylakoid membrane. The catalysed reaction is a plastoquinone + NADH + (n+1) H(+)(in) = a plastoquinol + NAD(+) + n H(+)(out). The enzyme catalyses a plastoquinone + NADPH + (n+1) H(+)(in) = a plastoquinol + NADP(+) + n H(+)(out). NDH-1 shuttles electrons from an unknown electron donor, via FMN and iron-sulfur (Fe-S) centers, to quinones in the respiratory and/or the photosynthetic chain. The immediate electron acceptor for the enzyme in this species is believed to be plastoquinone. Couples the redox reaction to proton translocation, and thus conserves the redox energy in a proton gradient. Cyanobacterial NDH-1 also plays a role in inorganic carbon-concentration. The sequence is that of NAD(P)H-quinone oxidoreductase subunit 3 from Prochlorococcus marinus (strain MIT 9301).